We begin with the raw amino-acid sequence, 506 residues long: Maturase K (506 aa).

It belongs to the intron maturase 2 family. MatK subfamily.

The protein resides in the plastid. Its subcellular location is the chloroplast. Usually encoded in the trnK tRNA gene intron. Probably assists in splicing its own and other chloroplast group II introns. The protein is Maturase K of Uncarina grandidieri (Mouse trap tree).